The sequence spans 316 residues: MANLKEIRDRIKSVKNTRKITEAMRLVAAAKVRRAQEQVLRSRPFADRLARILENLQSRMGFEDAASPLMQQRNVETITLVAVTGDRGLCGGYNANIIKRTEQRFAELKGKGFDVKLLLIGTKAIGYFTRRDYPIQATFSGLEQVPTADEANTISTDLLAEFLAESTDRVELIFTKFINLVSCKPVVQTLLPLDPQDIADPEDEIFRLTTKDGLLTVEPGAGPANTEPKIPSDIVFEQTPEQLLNALLPLYLQNQLLRSLQESAASELASRMTAMNNASDNAKELAKTLTLDYNKARQAAITQEILEVAGGAAAVG.

This sequence belongs to the ATPase gamma chain family. In terms of assembly, F-type ATPases have 2 components, CF(1) - the catalytic core - and CF(0) - the membrane proton channel. CF(1) has five subunits: alpha(3), beta(3), gamma(1), delta(1), epsilon(1). CF(0) has three main subunits: a, b and c.

It is found in the cellular thylakoid membrane. Its function is as follows. Produces ATP from ADP in the presence of a proton gradient across the membrane. The gamma chain is believed to be important in regulating ATPase activity and the flow of protons through the CF(0) complex. In Synechococcus sp. (strain CC9605), this protein is ATP synthase gamma chain.